A 241-amino-acid chain; its full sequence is Small ribosomal subunit protein eS4 (241 aa).

The region spanning 43–105 (IPLVMVLRDI…INKTFRVLQD (63 aa)) is the S4 RNA-binding domain.

Belongs to the eukaryotic ribosomal protein eS4 family.

In Methanosphaera stadtmanae (strain ATCC 43021 / DSM 3091 / JCM 11832 / MCB-3), this protein is Small ribosomal subunit protein eS4.